The primary structure comprises 158 residues: 6,7-dimethyl-8-ribityllumazine synthase (158 aa).

5-amino-6-(D-ribitylamino)uracil contacts are provided by residues Phe24, 58-60 (AFE), and 82-84 (AVI). A (2S)-2-hydroxy-3-oxobutyl phosphate-binding site is contributed by 87–88 (GT). His90 acts as the Proton donor in catalysis. 5-amino-6-(D-ribitylamino)uracil is bound at residue Phe115. Arg129 provides a ligand contact to (2S)-2-hydroxy-3-oxobutyl phosphate.

Belongs to the DMRL synthase family. As to quaternary structure, forms an icosahedral capsid composed of 60 subunits, arranged as a dodecamer of pentamers.

It carries out the reaction (2S)-2-hydroxy-3-oxobutyl phosphate + 5-amino-6-(D-ribitylamino)uracil = 6,7-dimethyl-8-(1-D-ribityl)lumazine + phosphate + 2 H2O + H(+). It functions in the pathway cofactor biosynthesis; riboflavin biosynthesis; riboflavin from 2-hydroxy-3-oxobutyl phosphate and 5-amino-6-(D-ribitylamino)uracil: step 1/2. Functionally, catalyzes the formation of 6,7-dimethyl-8-ribityllumazine by condensation of 5-amino-6-(D-ribitylamino)uracil with 3,4-dihydroxy-2-butanone 4-phosphate. This is the penultimate step in the biosynthesis of riboflavin. The protein is 6,7-dimethyl-8-ribityllumazine synthase of Ectopseudomonas mendocina (strain ymp) (Pseudomonas mendocina).